A 157-amino-acid polypeptide reads, in one-letter code: Ribonuclease H (157 aa).

Residues 2 to 145 (NAEISKIYTD…CDAIARAFAA (144 aa)) form the RNase H type-1 domain. Mg(2+) contacts are provided by aspartate 11, glutamate 50, aspartate 74, and aspartate 137.

It belongs to the RNase H family. As to quaternary structure, monomer. Requires Mg(2+) as cofactor.

The protein resides in the cytoplasm. It catalyses the reaction Endonucleolytic cleavage to 5'-phosphomonoester.. Functionally, endonuclease that specifically degrades the RNA of RNA-DNA hybrids. The chain is Ribonuclease H from Cyanothece sp. (strain PCC 7425 / ATCC 29141).